Here is a 202-residue protein sequence, read N- to C-terminus: LexA repressor (202 aa).

A DNA-binding region (H-T-H motif) is located at residues 28–48; that stretch reads RAEIASRLGFRSPNAAEEHLK. Residues Ser119 and Lys156 each act as for autocatalytic cleavage activity in the active site.

This sequence belongs to the peptidase S24 family. Homodimer.

The enzyme catalyses Hydrolysis of Ala-|-Gly bond in repressor LexA.. Represses a number of genes involved in the response to DNA damage (SOS response), including recA and lexA. Binds to the 16 bp palindromic sequence 5'-CTGTATATATATACAG-3'. In the presence of single-stranded DNA, RecA interacts with LexA causing an autocatalytic cleavage which disrupts the DNA-binding part of LexA, leading to derepression of the SOS regulon and eventually DNA repair. The polypeptide is LexA repressor (Sodalis glossinidius (strain morsitans)).